Here is a 79-residue protein sequence, read N- to C-terminus: Small ribosomal subunit protein bS18 (79 aa).

This sequence belongs to the bacterial ribosomal protein bS18 family. Part of the 30S ribosomal subunit. Forms a tight heterodimer with protein bS6.

Functionally, binds as a heterodimer with protein bS6 to the central domain of the 16S rRNA, where it helps stabilize the platform of the 30S subunit. The sequence is that of Small ribosomal subunit protein bS18 from Bradyrhizobium diazoefficiens (strain JCM 10833 / BCRC 13528 / IAM 13628 / NBRC 14792 / USDA 110).